We begin with the raw amino-acid sequence, 454 residues long: Ribosomal protein uS12 methylthiotransferase RimO (454 aa).

Positions 14 to 125 (SKVAFSHVGC…IAKVLDRVEK (112 aa)) constitute an MTTase N-terminal domain. [4Fe-4S] cluster-binding residues include Cys-23, Cys-59, Cys-88, Cys-163, Cys-167, and Cys-170. The 230-residue stretch at 149–378 (DKNKFVAYLR…ISVQQNISKD (230 aa)) folds into the Radical SAM core domain. In terms of domain architecture, TRAM spans 381-452 (QSYVGSKMKI…EYDLYGETLK (72 aa)).

It belongs to the methylthiotransferase family. RimO subfamily. [4Fe-4S] cluster serves as cofactor.

The protein localises to the cytoplasm. The enzyme catalyses L-aspartate(89)-[ribosomal protein uS12]-hydrogen + (sulfur carrier)-SH + AH2 + 2 S-adenosyl-L-methionine = 3-methylsulfanyl-L-aspartate(89)-[ribosomal protein uS12]-hydrogen + (sulfur carrier)-H + 5'-deoxyadenosine + L-methionine + A + S-adenosyl-L-homocysteine + 2 H(+). Catalyzes the methylthiolation of an aspartic acid residue of ribosomal protein uS12. The protein is Ribosomal protein uS12 methylthiotransferase RimO of Prochlorococcus marinus (strain MIT 9215).